The sequence spans 1001 residues: E3 ubiquitin-protein ligase etc-1 (1001 aa).

The region spanning 28 to 57 (QEKAARKVQKFWRGHRVQHNQRLLFRAEFD) is the IQ domain. Positions 66–115 (LEETIKMAQLLVNFYETNKDEERLVMTLSELVKLKTSDKEFEKRIRETQR) form a coiled coil. In terms of domain architecture, HECT spans 658–1001 (KVNDLKSMVR…INSGAGFELA (344 aa)). Cysteine 969 (glycyl thioester intermediate) is an active-site residue.

In terms of assembly, interacts with ify-1 and cyb-1.

It catalyses the reaction S-ubiquitinyl-[E2 ubiquitin-conjugating enzyme]-L-cysteine + [acceptor protein]-L-lysine = [E2 ubiquitin-conjugating enzyme]-L-cysteine + N(6)-ubiquitinyl-[acceptor protein]-L-lysine.. It participates in protein modification; protein ubiquitination. Functionally, E3 ubiquitin-protein ligase that accepts ubiquitin from E2 ubiquitin-conjugating enzymes, such as ubc-18, in the form of a thioester and then directly transfers the ubiquitin to targeted substrates. Ubiquitinates ify-1 and cyb-1 targeting them for degradation in post-meiotic embryos. The protein is E3 ubiquitin-protein ligase etc-1 of Caenorhabditis elegans.